The primary structure comprises 272 residues: Lyso-glycine lipid O-acyltransferase (272 aa).

This sequence belongs to the O-acyltransferase GlsA family.

It carries out the reaction a lyso-glycine lipid + a fatty acyl-[ACP] = a glycine lipid + holo-[ACP]. The catalysed reaction is N-[(3R)-3-hydroxyhexadecanoyl]-glycine + hexadecanoyl-[ACP] = N-[(3R)-3-(hexadecanoyloxy)hexadecanoyl]-glycine + holo-[ACP]. It participates in lipid metabolism. In terms of biological role, is involved in the production of glycine lipids (GL), which are phosphorus-free membrane lipids important for fitness during growth of the human gut bacterium B.thetaiotaomicron in vivo and in vitro. Catalyzes the second step of GL biosynthesis, i.e. the O-acylation of the hydroxyl group of lyso-glycine lipids, resulting in the production of the mature diacylated glycine lipids. This is Lyso-glycine lipid O-acyltransferase from Bacteroides thetaiotaomicron (strain ATCC 29148 / DSM 2079 / JCM 5827 / CCUG 10774 / NCTC 10582 / VPI-5482 / E50).